A 281-amino-acid polypeptide reads, in one-letter code: MVPGKFIFTATFVLLCTIIAVVLEYQSKKDKPVLDKEKLQEFPLVAKTVLTHNTAIYRFGLPKSTQVLGLPIGQHISVQANINGKDILRSYTPTSLDSDAVGHFELLIKSYEKGNISKHFAQLNIGDKIKVRGPKGFYHYQPNMNEEIGMIAGGTGIAPMYQIMKSIFANDSDKTKVSLVYGNQTEEDILLKKELDAFVERKPDQFKVYYLLDKAPEAWTGGVGYITVDTMKERLPAPAEGVQLLVCGPPPMVSSIKRNAVTLGYEKAKPISKMGDQIFVF.

The helical transmembrane segment at 2 to 22 (VPGKFIFTATFVLLCTIIAVV) threads the bilayer. Residues 37–141 (EKLQEFPLVA…RGPKGFYHYQ (105 aa)) form the FAD-binding FR-type domain. FAD contacts are provided by residues 121 to 136 (AQLN…GPKG) and 147 to 179 (EIGM…KVSL).

The protein belongs to the flavoprotein pyridine nucleotide cytochrome reductase family. As to quaternary structure, monomer. Component of the 2-(3-amino-3-carboxypropyl)histidine synthase complex composed of DPH1, DPH2, DPH3 and a NADH-dependent reductase, predominantly CBR1. FAD is required as a cofactor.

The protein resides in the mitochondrion outer membrane. It carries out the reaction 2 Fe(III)-[cytochrome b5] + NADH = 2 Fe(II)-[cytochrome b5] + NAD(+) + H(+). It catalyses the reaction 2 Fe(3+)-[Dph3] + NADH = 2 Fe(2+)-[Dph3] + NAD(+) + H(+). Its pathway is protein modification; peptidyl-diphthamide biosynthesis. NADH-dependent reductase for DPH3 and cytochrome b5. Required for the first step of diphthamide biosynthesis, a post-translational modification of histidine which occurs in elongation factor 2. DPH1 and DPH2 transfer a 3-amino-3-carboxypropyl (ACP) group from S-adenosyl-L-methionine (SAM) to a histidine residue, the reaction is assisted by a reduction system comprising DPH3 and a NADH-dependent reductase, predominantly CBR1. By reducing DPH3, also involved in the formation of the tRNA wobble base modification mcm5s 2U (5-methoxycarbonylmethyl-2-thiouridine), mediated by the elongator complex. The cytochrome b5/NADH cytochrome b5 reductase electron transfer system supports the catalytic activity of several sterol biosynthetic enzymes. In Kluyveromyces lactis (strain ATCC 8585 / CBS 2359 / DSM 70799 / NBRC 1267 / NRRL Y-1140 / WM37) (Yeast), this protein is NADH-cytochrome b5 reductase 1 (CBR1).